Consider the following 388-residue polypeptide: Cytochrome b (388 aa).

The next 4 membrane-spanning stretches (helical) occupy residues 32–52, 76–98, 113–133, and 179–199; these read FGSLLGFCLVIQIVTGVTLAM, WLIRYLHSNTASAFFFLVYLHVG, TWTIGTIILVLMMATAFLGYV, and FFALHFVLPFVLAALVLMHLI. Heme b-binding residues include His-82 and His-96. Positions 183 and 197 each coordinate heme b. A ubiquinone is bound at residue His-202. The next 4 helical transmembrane spans lie at 226–246, 290–310, 322–342, and 349–369; these read FIFKDLITIFLFIIVLSIFIF, LLGVIAMFSAILIIMIMPITD, LSKITFYIFVANFLVLMQLGA, and FIEFGQISTVLYFSHFLIIVP.

The protein belongs to the cytochrome b family. In terms of assembly, fungal cytochrome b-c1 complex contains 10 subunits; 3 respiratory subunits, 2 core proteins and 5 low-molecular weight proteins. Cytochrome b-c1 complex is a homodimer. Heme b serves as cofactor.

Its subcellular location is the mitochondrion inner membrane. Component of the ubiquinol-cytochrome c reductase complex (complex III or cytochrome b-c1 complex) that is part of the mitochondrial respiratory chain. The b-c1 complex mediates electron transfer from ubiquinol to cytochrome c. Contributes to the generation of a proton gradient across the mitochondrial membrane that is then used for ATP synthesis. The sequence is that of Cytochrome b (cob) from Zymoseptoria tritici (Speckled leaf blotch fungus).